The chain runs to 780 residues: MKFTEGMWLLREGIRIDWMSNVERLNVDKDTVNLLLNKFQRHRGDTLNSSTVSARVTSPLEGIIGVKLVHWAGGLDNGPHYELNTSAGHTEITHEKGKNLKYTSGRLELDINIAPNELAFTFTTGADGQDKRKKLTGHSFRSIGYVGDSTTPKSQLSDGIFYERQGYTLAELDLSVGEKLYGLGERFGPFVKNGQSVNIWNEDGGTSSELAYKNIPFYISSNGYGVFVNHPGKVSLELQSERTTRVNVSVEGEELEYFVIEGKNPKEILKRWTDLTGKPALVPAWSYGLWLTTSFTTNYSERTVTGFLDGFKDRNLPLSVFHFDCFWMKSYQWCDFEFDADMFPDAAGYLARLKERGLKLSIWINPYVGQASPLFEIGKREGYFIKRIDGSVWQWDLWQAGMAVVDFTNPAACSWYTGHLKRLMDLGIDTFKTDFAERIPFKNITYHDGSDPARMHNYYALLYNKVVYETMTSISGKSNSLLFARSTSVGGQKYPVHWGGDCESTYEAMAESLRGGLSLGLAGYIFWASDIGGFEGTPPPALYKRWVQFGLLSSHSRLHGSSSFRVPWIYGEDCSDVLRDCVKRKISLTPYLLAEALNGHRSGTPLMRPMFMEFPEDLNTYPLDTQYMFGSNLLVAPVFSDEGIVTFYVPRTPEEEGRKQWISWFDHGKKYEGGRWYTETHGFDTLPILIRPGSVTPINYKLEKPEGNPLDGLEILVNGSIDKEVEIEIVDPETTHKVLKVMTVSERETENGVEVIARLDGVDGNENSVKVNWVGHGVTK.

4 N-linked (GlcNAc...) asparagine glycosylation sites follow: Asn48, Asn84, Asn247, and Asn298. Active-site residues include Asp434 and Glu437. Asn443 is a glycosylation site (N-linked (GlcNAc...) asparagine). Catalysis depends on Asp501, which acts as the Proton donor. N-linked (GlcNAc...) asparagine glycosylation occurs at Asn718.

This sequence belongs to the glycosyl hydrolase 31 family.

Its subcellular location is the secreted. It carries out the reaction Hydrolysis of terminal, non-reducing alpha-D-xylose residues with release of alpha-D-xylose.. Functionally, catalyzes the liberation of alpha-xylose from the non-reducing terminal glucose of xyloglucan oligosaccharides. This chain is Alpha-xylosidase, found in Emericella nidulans (strain FGSC A4 / ATCC 38163 / CBS 112.46 / NRRL 194 / M139) (Aspergillus nidulans).